The chain runs to 1343 residues: DNA-directed RNA polymerase subunit beta (1343 aa).

This sequence belongs to the RNA polymerase beta chain family. In terms of assembly, the RNAP catalytic core consists of 2 alpha, 1 beta, 1 beta' and 1 omega subunit. When a sigma factor is associated with the core the holoenzyme is formed, which can initiate transcription.

It catalyses the reaction RNA(n) + a ribonucleoside 5'-triphosphate = RNA(n+1) + diphosphate. Its function is as follows. DNA-dependent RNA polymerase catalyzes the transcription of DNA into RNA using the four ribonucleoside triphosphates as substrates. The protein is DNA-directed RNA polymerase subunit beta of Shewanella sp. (strain W3-18-1).